The chain runs to 136 residues: Protein YebF (136 aa).

The first 23 residues, 1-23 (MKKTGLALVLATILLGMMGSVHA), serve as a signal peptide directing secretion. In terms of domain architecture, YebF/Cmi spans 30–117 (KVPACIGLNQ…KSGTMTYTGL (88 aa)). Cys34 and Cys107 are disulfide-bonded. Residues 117-136 (LNAQTRPDPQIGLNSQAGPK) form a disordered region.

It belongs to the YebF family.

The protein localises to the secreted. The protein is Protein YebF of Yersinia pseudotuberculosis serotype O:1b (strain IP 31758).